The following is a 654-amino-acid chain: Endoplasmic reticulum chaperone BiP (654 aa).

A signal peptide spans 1 to 18; it reads MKLSLVAAVLLLLCAARA. Residues 1-80 are required for interaction with ELAPOR1; it reads MKLSLVAAVL…EGERLIGDAA (80 aa). 36–39 contacts ATP; it reads GTTY. Serine 86 carries the phosphoserine modification. Residue lysine 96 participates in ATP binding. Lysine 125 carries the post-translational modification N6-acetyllysine. The tract at residues 125 to 280 is nucleotide-binding (NBD); it reads KPYIQVDIGG…KKKTGKDVRK (156 aa). Position 160 is a 3'-nitrotyrosine (tyrosine 160). Residue lysine 213 is modified to N6-acetyllysine. 227-229 is an ATP binding site; the sequence is GGT. At lysine 271 the chain carries N6-acetyllysine. Position 293 to 300 (293 to 300) interacts with ATP; the sequence is EKAKRALS. An N6-acetyllysine modification is found at lysine 326. Lysine 352 participates in a covalent cross-link: Glycyl lysine isopeptide (Lys-Gly) (interchain with G-Cter in SUMO2). N6-acetyllysine; alternate is present on lysine 353. Lysine 353 participates in a covalent cross-link: Glycyl lysine isopeptide (Lys-Gly) (interchain with G-Cter in SUMO1); alternate. 364 to 367 is an ATP binding site; that stretch reads GSTR. The tract at residues 409-419 is interdomain linker; it reads QDTGDLVLLDV. Positions 420-500 are substrate-binding (SBD); that stretch reads CPLTLGIETV…PRGVPQIEVT (81 aa). Residue lysine 447 is modified to N6-succinyllysine. The residue at position 492 (arginine 492) is an Omega-N-methylarginine. Threonine 518 carries the post-translational modification O-AMP-threonine; alternate. Threonine 518 bears the Phosphothreonine; alternate mark. An N6,N6,N6-trimethyllysine; by METTL21A; in vitro modification is found at lysine 585. N6,N6-dimethyllysine; alternate is present on lysine 585. N6-methyllysine; alternate is present on lysine 585. The residue at position 591 (lysine 591) is an N6-methyllysine. Residues 632–654 are disordered; the sequence is SKLYGSAGPPPTGEEDTSERDEL. Residues threonine 643 and threonine 648 each carry the phosphothreonine modification. Acidic residues predominate over residues 644–654; the sequence is GEEDTSERDEL. At serine 649 the chain carries Phosphoserine. The Prevents secretion from ER signature appears at 651–654; sequence RDEL.

This sequence belongs to the heat shock protein 70 family. As to quaternary structure, monomer and homooligomer; homooligomerization via the interdomain linker inactivates the chaperone activity and acts as a storage of HSPA5/BiP molecules. Interacts with DNAJC1 (via J domain). Component of an EIF2 complex at least composed of CELF1/CUGBP1, CALR, CALR3, EIF2S1, EIF2S2, HSP90B1 and HSPA5. Part of a large chaperone multiprotein complex comprising DNAJB11, HSP90B1, HSPA5, HYOU, PDIA2, PDIA4, PDIA6, PPIB, SDF2L1, UGGT1 and very small amounts of ERP29, but not, or at very low levels, CALR nor CANX. Interacts with TMEM132A and TRIM21. May form a complex with ERLEC1, OS9, SEL1L and SYVN1. Interacts with DNAJC10. Interacts with DNAJB9/ERdj4; leading to recruit HSPA5/BiP to ERN1/IRE1. Interacts with ERN1/IRE1 (via luminal domain); the interaction takes place following interaction with DNAJB9/ERdj4 and leads to inactivate ERN1/IRE1, the interaction also competitively inhibits ERN1 interaction with MANF. Interacts directly with MANF (via SAP domain); the interaction inhibits ATP binding to HSPA5/BiP and subsequent nucleotide exchange. Interacts with EIF2AK3/PERK (via luminal domain); interaction leads to inactivate EIF2AK3/PERK. Interacts with MX1. Interacts with METTL23. Interacts with CEMIP; the interaction induces calcium leakage from the endoplasmic reticulum and cell migration. Interacts with PCSK4 form; the interaction takes place in the endoplasmic reticulum. Interacts with CIPC. Interacts with CCDC88B (via C-terminus); the interaction opposes ERN1-mediated JNK activation, protecting against apoptosis. Interacts with INPP5K; necessary for INPP5K localization at the endoplasmic reticulum. Interacts with MANF; the interaction is direct. Interacts with LOXL2; leading to activate the ERN1/IRE1-XBP1 pathway of the unfolded protein response. Interacts with CLU under stressed condition; interaction increases CLU protein stability; facilitates its retrotranslocation and redistribution to the mitochondria; cooperatively suppress stress-induced apoptosis by stabilizing mitochondrial membrane integrity. Interacts with CCDC47. Interacts with CLN3. Interacts with ELAPOR1; may regulate the function of HSPA5 in apoptosis and cell proliferation. Interacts with CASP7. Interacts with ILDR2; the interaction stabilizes ILDR2 expression. Interacts with ADAM7. Post-translationally, in unstressed cells, AMPylation at Thr-518 by FICD inactivates the chaperome activity: AMPylated form is locked in a relatively inert state and only weakly stimulated by J domain-containing proteins. In response to endoplasmic reticulum stress, de-AMPylation by the same protein, FICD, restores the chaperone activity.

The protein localises to the endoplasmic reticulum lumen. The protein resides in the melanosome. It localises to the cytoplasm. Its subcellular location is the cell surface. The catalysed reaction is ATP + H2O = ADP + phosphate + H(+). Its activity is regulated as follows. The chaperone activity is regulated by ATP-induced allosteric coupling of the nucleotide-binding (NBD) and substrate-binding (SBD) domains. In the ADP-bound and nucleotide-free (apo) states, the two domains have little interaction. In contrast, in the ATP-bound state the two domains are tightly coupled, which results in drastically accelerated kinetics in both binding and release of polypeptide substrates. J domain-containing co-chaperones (DNAJB9/ERdj4 or DNAJC10/ERdj5) stimulate the ATPase activity and are required for efficient substrate recognition by HSPA5/BiP. Homooligomerization inactivates participating HSPA5/BiP protomers and probably act as reservoirs to store HSPA5/BiP molecules when they are not needed by the cell. In terms of biological role, endoplasmic reticulum chaperone that plays a key role in protein folding and quality control in the endoplasmic reticulum lumen. Involved in the correct folding of proteins and degradation of misfolded proteins via its interaction with DNAJC10/ERdj5, probably to facilitate the release of DNAJC10/ERdj5 from its substrate. Acts as a key repressor of the EIF2AK3/PERK and ERN1/IRE1-mediated unfolded protein response (UPR). In the unstressed endoplasmic reticulum, recruited by DNAJB9/ERdj4 to the luminal region of ERN1/IRE1, leading to disrupt the dimerization of ERN1/IRE1, thereby inactivating ERN1/IRE1. Also binds and inactivates EIF2AK3/PERK in unstressed cells. Accumulation of misfolded protein in the endoplasmic reticulum causes release of HSPA5/BiP from ERN1/IRE1 and EIF2AK3/PERK, allowing their homodimerization and subsequent activation. Plays an auxiliary role in post-translational transport of small presecretory proteins across endoplasmic reticulum (ER). May function as an allosteric modulator for SEC61 channel-forming translocon complex, likely cooperating with SEC62 to enable the productive insertion of these precursors into SEC61 channel. Appears to specifically regulate translocation of precursors having inhibitory residues in their mature region that weaken channel gating. May also play a role in apoptosis and cell proliferation. The protein is Endoplasmic reticulum chaperone BiP of Ictidomys tridecemlineatus (Thirteen-lined ground squirrel).